The chain runs to 312 residues: Regulation of nuclear pre-mRNA domain-containing protein 1A (312 aa).

Ser2 carries the post-translational modification N-acetylserine. A CID domain is found at 2–133 (SAFSEAALEK…QLKHALYGDK (132 aa)). Residues Ser153, Ser156, and Ser285 each carry the phosphoserine modification. Positions 244 to 286 (LADFLRCQKEALAEKEHKLEEYKRKLARVSLVRKELRARIQSL) form a coiled coil.

The protein belongs to the UPF0400 (RTT103) family. In terms of assembly, may form a heterodimer with RPRD1B. Associates with the RNA polymerase II subunit POLR2A (via CTD phosphorylated at 'Ser-2' and 'Ser-7' of the heptad repeats).

It is found in the nucleus. In terms of biological role, interacts with phosphorylated C-terminal heptapeptide repeat domain (CTD) of the largest RNA polymerase II subunit POLR2A, and participates in dephosphorylation of the CTD by RPAP2. May act as a negative regulator of cyclin-D1 (CCND1) and cyclin-E (CCNE1) in the cell cycle. The polypeptide is Regulation of nuclear pre-mRNA domain-containing protein 1A (Rprd1a) (Mus musculus (Mouse)).